A 33-amino-acid chain; its full sequence is Photosystem II reaction center protein T (33 aa).

Residues 3 to 23 form a helical membrane-spanning segment; the sequence is ALVYTFLLVSTLGIIFFAIFF.

This sequence belongs to the PsbT family. In terms of assembly, PSII is composed of 1 copy each of membrane proteins PsbA, PsbB, PsbC, PsbD, PsbE, PsbF, PsbH, PsbI, PsbJ, PsbK, PsbL, PsbM, PsbT, PsbY, PsbZ, Psb30/Ycf12, at least 3 peripheral proteins of the oxygen-evolving complex and a large number of cofactors. It forms dimeric complexes.

Its subcellular location is the plastid. The protein localises to the chloroplast thylakoid membrane. Functionally, found at the monomer-monomer interface of the photosystem II (PS II) dimer, plays a role in assembly and dimerization of PSII. PSII is a light-driven water plastoquinone oxidoreductase, using light energy to abstract electrons from H(2)O, generating a proton gradient subsequently used for ATP formation. The protein is Photosystem II reaction center protein T of Arabidopsis thaliana (Mouse-ear cress).